A 149-amino-acid polypeptide reads, in one-letter code: Protein FAM72B (149 aa).

It belongs to the FAM72 family.

The chain is Protein FAM72B (FAM72B) from Homo sapiens (Human).